A 232-amino-acid polypeptide reads, in one-letter code: MSGEGENPASKPTPVQDVQGDGRWMSLHHRFVADSKDKEPEVVFIGDSLVQLMHQCEIWRELFSPLHALNFGIGGDSTQHVLWRLENGELEHIRPKIVVVWVGTNNHSHTAEQVTGGIKAIVQLVNKLQPQARVVVLGLLPRGQHPNPLREKNRQVNELVRAALAGYPRAHFLDADPGFVHSDGTISHHDMYDYLHLSRLGYTPVCRALHSLLLRLLAQDQGQGIPLPETAP.

The disordered stretch occupies residues 1–20; it reads MSGEGENPASKPTPVQDVQG. Position 2 is an N-acetylserine (S2). S2 is modified (phosphoserine). Residues S48, D193, and H196 contribute to the active site.

Belongs to the 'GDSL' lipolytic enzyme family. Platelet-activating factor acetylhydrolase IB beta/gamma subunits subfamily. Forms a catalytic dimer which is either homodimer (alpha1/alpha1 homodimer) or heterodimer with PAFAH1B2 (alpha1/alpha2 heterodimer). Component of the cytosolic (PAF-AH (I)) heterotetrameric enzyme, which is composed of PAFAH1B1 (beta), PAFAH1B2 (alpha2) and PAFAH1B3 (alpha1) subunits. The catalytic activity of the enzyme resides in the alpha1 (PAFAH1B3) and alpha2 (PAFAH1B2) subunits, whereas the beta subunit (PAFAH1B1) has regulatory activity. Trimer formation is not essential for the catalytic activity. Interacts with VLDLR; this interaction may modulate the Reelin pathway. In terms of tissue distribution, expressed in brain, spleen, lung, liver, kidney and testis. Not expressed in heart and skeletal muscle. Expressed in fetal brain as heterodimer. Not expressed in adult tissues. Expressed exclusively in granule cells.

Its subcellular location is the cytoplasm. It carries out the reaction a 1-O-alkyl-2-acetyl-sn-glycero-3-phosphocholine + H2O = a 1-O-alkyl-sn-glycero-3-phosphocholine + acetate + H(+). The catalysed reaction is 1-O-hexadecyl-2-acetyl-sn-glycero-3-phosphocholine + H2O = 1-O-hexadecyl-sn-glycero-3-phosphocholine + acetate + H(+). The enzyme catalyses 1-O-hexadecyl-2-acetyl-sn-glycero-3-phosphate + H2O = 1-O-hexadecyl-sn-glycero-3-phosphate + acetate + H(+). Beta subunit (PAFAH1B1) inhibits the acetylhydrolase activity of the alpha1/alpha1 catalytic homodimer. In terms of biological role, alpha1 catalytic subunit of the cytosolic type I platelet-activating factor (PAF) acetylhydrolase (PAF-AH (I)) heterotetrameric enzyme that catalyzes the hydrolyze of the acetyl group at the sn-2 position of PAF and its analogs and modulates the action of PAF. The activity and substrate specificity of PAF-AH (I) are affected by its subunit composition. Both alpha1/alpha1 homodimer (PAFAH1B3/PAFAH1B3 homodimer) and alpha1/alpha2 heterodimer(PAFAH1B3/PAFAH1B2 heterodimer) hydrolyze 1-O-alkyl-2-acetyl-sn-glycero-3-phosphoric acid (AAGPA) more efficiently than PAF, but they have little hydrolytic activity towards 1-O-alkyl-2-acetyl-sn-glycero-3-phosphorylethanolamine (AAGPE). Plays an important role during the development of brain. This is Platelet-activating factor acetylhydrolase IB subunit alpha1 from Rattus norvegicus (Rat).